The chain runs to 447 residues: Phosphoglucosamine mutase (447 aa).

Ser102 acts as the Phosphoserine intermediate in catalysis. Residues Ser102, Asp241, Asp243, and Asp245 each coordinate Mg(2+). Phosphoserine is present on Ser102.

It belongs to the phosphohexose mutase family. The cofactor is Mg(2+). Post-translationally, activated by phosphorylation.

It catalyses the reaction alpha-D-glucosamine 1-phosphate = D-glucosamine 6-phosphate. Functionally, catalyzes the conversion of glucosamine-6-phosphate to glucosamine-1-phosphate. The chain is Phosphoglucosamine mutase from Hamiltonella defensa subsp. Acyrthosiphon pisum (strain 5AT).